The primary structure comprises 208 residues: Probable DNA-3-methyladenine glycosylase (208 aa).

The protein belongs to the DNA glycosylase MPG family.

It is found in the nucleus. It carries out the reaction Hydrolysis of alkylated DNA, releasing 3-methyladenine, 3-methylguanine, 7-methylguanine and 7-methyladenine.. In terms of biological role, hydrolysis of the deoxyribose N-glycosidic bond to excise 3-methyladenine, and 7-methylguanine from the damaged DNA polymer formed by alkylation lesions. The sequence is that of Probable DNA-3-methyladenine glycosylase from Encephalitozoon cuniculi (strain GB-M1) (Microsporidian parasite).